Reading from the N-terminus, the 496-residue chain is MGMHIEMKNISKAFNGNPVLKNAQFMIETGEVHALMGENGAGKSTLMKILTGVYKKDGGTIKIDGQERTFKNAKEAEEYGIAFIHQELNILPNLTVAENMFLGKELMYGKTGILRTRQMNAIAQQQLAELGLHVRGAMLAEELSVGQQQIIEIAKALMTNASVIIMDEPTAALTDREIETLFTVINKLRKEGVSFVYISHRMEEIFSICDAITILRDGEYVGKRLIPETSFDEVVSMMVGRSIGERYPERNSQIGDVIFEMRNGTKKGKFENVSFQVRKGEILGVAGLMGAGRTDIMKAIFGYEPLDSGQIFINGQEVKIDSPIDAIRQRIAFITEDRKSEGLVLDFSIRENLALPNLENLSKGSVLSNELEQQFTEDMMKLLNVKASSGEQAVKSLSGGNQQKIVIAKWLGIHPQLLILDEPTRGVDVGAKKEIYSIMNKLTEQGDAVIMVSSELPEVLGMSDRVLVIHEGKVGGILGKDEASQESIMALATGGE.

ABC transporter domains follow at residues 5 to 242 (IEMK…VGRS) and 252 to 496 (SQIG…TGGE). 37-44 (GENGAGKS) serves as a coordination point for ATP.

The protein belongs to the ABC transporter superfamily. Ribose importer (TC 3.A.1.2.1) family. The complex is composed of an ATP-binding protein (RbsA), two transmembrane proteins (RbsC) and a solute-binding protein (RbsB).

The protein localises to the cell membrane. It catalyses the reaction D-ribose(out) + ATP + H2O = D-ribose(in) + ADP + phosphate + H(+). Functionally, part of the ABC transporter complex RbsABC involved in ribose import. Responsible for energy coupling to the transport system. This is Ribose import ATP-binding protein RbsA from Bacillus cereus (strain ATCC 14579 / DSM 31 / CCUG 7414 / JCM 2152 / NBRC 15305 / NCIMB 9373 / NCTC 2599 / NRRL B-3711).